The primary structure comprises 464 residues: Zinc transporter 6-A (464 aa).

Topologically, residues 1–33 (MGTIYLFRKTQRSLLGKLAQEFRLVTADRRSWK) are cytoplasmic. A helical transmembrane segment spans residues 34 to 54 (ILLFGAINVVCTAFLLTWCSS). Residues 55–64 (TNSMALTAYT) lie on the Extracellular side of the membrane. Residues 65-85 (YLTIFDLFSLITSLISYWVTM) form a helical membrane-spanning segment. The Cytoplasmic segment spans residues 86–98 (KKPSPTYSFGFER). The chain crosses the membrane as a helical span at residues 99-119 (FEVLAVFASTVLAQLGALFIL). Topologically, residues 120 to 134 (KESAERFIEQPEIHT) are extracellular. The helical transmembrane segment at 135 to 155 (GRLLVGTFVALFFNLFTMLSI) threads the bilayer. Residues 156–200 (RNKPFAYVSDAASTSWLQEHVADLSRSLCGIIPGLSSIFLPRMNP) lie on the Cytoplasmic side of the membrane. A helical transmembrane segment spans residues 201 to 221 (FVLIDIAGALALCITYMLIEI). Topologically, residues 222-223 (NN) are extracellular. A helical transmembrane segment spans residues 224 to 244 (YFAVDTASAVAIAVMTFGTMY). Residues 245–464 (PMSVYSGKVL…TPGQFTQFRQ (220 aa)) lie on the Cytoplasmic side of the membrane.

It belongs to the cation diffusion facilitator (CDF) transporter (TC 2.A.4) family. SLC30A subfamily. As to quaternary structure, heterodimer with SLC30A5; form a functional zinc ion transmembrane transporter.

It localises to the golgi apparatus. The protein localises to the trans-Golgi network membrane. Has probably no intrinsic transporter activity but together with SLC30A5 forms a functional zinc ion:proton antiporter heterodimer, mediating zinc entry into the lumen of organelles along the secretory pathway. As part of that zinc ion:proton antiporter, contributes to zinc ion homeostasis within the early secretory pathway and regulates the activation and folding of enzymes like alkaline phosphatases and enzymes involved in phosphatidylinositol glycan anchor biosynthesis. This chain is Zinc transporter 6-A (slc30a6-a), found in Xenopus laevis (African clawed frog).